The following is a 277-amino-acid chain: Ras suppressor protein 1 (277 aa).

Residues 1-23 (MSKSLKKLVEESREKNQPEVDMS) form a disordered region. Residue S2 is modified to N-acetylserine. Over residues 7-23 (KLVEESREKNQPEVDMS) the composition is skewed to basic and acidic residues. 7 LRR repeats span residues 41–63 (HITQLVLSHNKLTTVPPNIAELK), 64–85 (NLEVLNFFNNQIEELPTQISSL), 87–109 (KLKHLNLGMNRLNTLPRGFGSLP), 110–133 (ALEVLDLTYNNLNENSLPGNFFYL), 135–156 (TLRALYLSDNDFEILPPDIGKL), 158–179 (KLQILSLRDNDLISLPKEIGEL), and 181–202 (QLKELHIQGNRLTVLPPELGNL). The interval 250 to 277 (MQANPEPPKKNNDKSKKISRKPLAAKNK) is disordered. Over residues 256 to 265 (PPKKNNDKSK) the composition is skewed to basic and acidic residues.

Its function is as follows. Potentially plays a role in the Ras signal transduction pathway. Capable of suppressing v-Ras transformation in vitro. The chain is Ras suppressor protein 1 (RSU1) from Bos taurus (Bovine).